Reading from the N-terminus, the 440-residue chain is Nitrilase and fragile histidine triad fusion protein NitFhit (440 aa).

One can recognise a CN hydrolase domain in the interval 14 to 264 (RHFIAVCQMT…VDMCFAEIDL (251 aa)). Active-site residues include E54, K127, and C169. The region spanning 297–405 (GGLKFARFNI…LPRRAGDFGD (109 aa)) is the HIT domain. The Histidine triad motif signature appears at 390–394 (HVHIH). H392 functions as the Tele-AMP-histidine intermediate in the catalytic mechanism.

It in the N-terminal section; belongs to the UPF0012 family. As to quaternary structure, homotetramer. The cofactor is Mn(2+).

It catalyses the reaction P(1),P(3)-bis(5'-adenosyl) triphosphate + H2O = AMP + ADP + 2 H(+). Its function is as follows. Cleaves A-5'-PPP-5'A to yield AMP and ADP. This chain is Nitrilase and fragile histidine triad fusion protein NitFhit, found in Caenorhabditis elegans.